Reading from the N-terminus, the 307-residue chain is Pollen allergen KBG 60 (307 aa).

A signal peptide spans 1–22 (MAVQKYTVALFLVALVVGPAAS).

It belongs to the Poa p IX/Phl p VI allergen family. Pollen.

This chain is Pollen allergen KBG 60, found in Poa pratensis (Kentucky bluegrass).